Here is a 156-residue protein sequence, read N- to C-terminus: Endoribonuclease YbeY (156 aa).

Zn(2+) contacts are provided by histidine 105, histidine 109, and aspartate 115.

Belongs to the endoribonuclease YbeY family. Zn(2+) is required as a cofactor.

The protein resides in the cytoplasm. Its function is as follows. Single strand-specific metallo-endoribonuclease involved in late-stage 70S ribosome quality control and in maturation of the 3' terminus of the 16S rRNA. The polypeptide is Endoribonuclease YbeY (Chlorobium chlorochromatii (strain CaD3)).